A 130-amino-acid polypeptide reads, in one-letter code: Fumarate reductase subunit C (130 aa).

3 consecutive transmembrane segments (helical) span residues 37–57 (VWFS…PAGW), 60–80 (FVGF…LLAA), and 109–129 (VIKA…AVAL).

It belongs to the FrdC family. In terms of assembly, part of an enzyme complex containing four subunits: a flavoprotein (FrdA), an iron-sulfur protein (FrdB), and two hydrophobic anchor proteins (FrdC and FrdD).

It is found in the cell inner membrane. Its function is as follows. Two distinct, membrane-bound, FAD-containing enzymes are responsible for the catalysis of fumarate and succinate interconversion; fumarate reductase is used in anaerobic growth, and succinate dehydrogenase is used in aerobic growth. Anchors the catalytic components of the fumarate reductase complex to the cell inner membrane, binds quinones. This Yersinia enterocolitica serotype O:8 / biotype 1B (strain NCTC 13174 / 8081) protein is Fumarate reductase subunit C.